A 1030-amino-acid polypeptide reads, in one-letter code: MSTEGSGPVRFPAMEDAVLERWEKEKTFEQSISAREGKPVYVFYDGPPFATGLPHYGHILTSYIKDVIPRYQTMLGKQVPRRWGWDCHGLPVEFEVEKAMGFKSKRDILEFGVEQFNDECRELVLKYADDWRGFVNRMGRWVDFDGAYKTMDNDYMESVLWGFKTLHDKGHVYEGGKIVPYCVRCQTVLSNFEARLDDAFRPRRDMSAYVKFRQQDRPDTFFLAWTTTPWTLPANVALAVAADENYVCIEHGEERLWLAEGCLGGLFDEPVILERCTGAELAGLRYLPVVGEVIDASAHRVVTADFVQMGDGSGIVHIAPAFGEDDALLGQQYELPAPNPVRDDGTFSDAVAQYAGQNIFEATPRILADLKSSGLLFKQEQIEHNYPHCWRCDNPLIYRAVESWFIRASALREQLVENNSQVNWVPEHVKEGRFGDWIRNARDWAVSRNRFWGAPIPVWRCDQCGTVEVMGSIAQIEARSGRKVEDLHVPHIDEHRFACQCCEGTMSRVTGVFDCWFESGAMPFASRHYPFENKQEFEQTFPADFIVEYLAQTRGWFYTMMVISTGCFEQNPFKNAMCHGVILAKDGRKMSKRLKNYPNPMDLMQTHGSDALRVALLASPVCKGEDIKFSEESVRDVVRRYHLLFWNCLQFYKTFTEIDQFSPSGDLGQPLDNVLDHYLLHELAALESDIKMWMESLDFSKIYSRIEVFINVLSTWYLRLNKARIWRDGLDDDKRQCYEVLHYALSNFARLLAPFMPFLAEAVYTELGYADSVHLQDWPSIDRQYLSYELADEMSSLRNLIASVRNVRETNGVSQKFPLRSIRVAGIEQAVLERYAQFLEEELNVKQVQWAADADEWAQPVVVLIFSLLGKRLGPAMKAVTTAVKAGEYVIDEQGGLVAAGQTIQPHEFERRLTVRDTLNNVGIVENMVVWLDLDIDASLKREGAVRELNRRLQDLRKKAKLGYTEKVDIAVLGGAYVDEILVHHEDWLKSQLLVQSLLRSDLEAPLAVDEVELPEGDPVRIQLRRSVLA.

Positions 48–58 (PFATGLPHYGH) match the 'HIGH' region motif. The 'KMSKS' region signature appears at 589-593 (KMSKR). Lysine 592 contacts ATP.

It belongs to the class-I aminoacyl-tRNA synthetase family. IleS type 2 subfamily. In terms of assembly, monomer. It depends on Zn(2+) as a cofactor.

The protein localises to the cytoplasm. It catalyses the reaction tRNA(Ile) + L-isoleucine + ATP = L-isoleucyl-tRNA(Ile) + AMP + diphosphate. Functionally, catalyzes the attachment of isoleucine to tRNA(Ile). As IleRS can inadvertently accommodate and process structurally similar amino acids such as valine, to avoid such errors it has two additional distinct tRNA(Ile)-dependent editing activities. One activity is designated as 'pretransfer' editing and involves the hydrolysis of activated Val-AMP. The other activity is designated 'posttransfer' editing and involves deacylation of mischarged Val-tRNA(Ile). Its function is as follows. Confers high-level resistance to the antibiotic mupirocin (pseudomonic acid A), an Ile-analog produced by P.fluorescens NCIMB 10586 itself that competitively inhibits activation by Ile-tRNA synthetase, thus inhibiting protein biosynthesis. The polypeptide is Isoleucine--tRNA ligase 2 (ileS2) (Pseudomonas fluorescens).